A 132-amino-acid polypeptide reads, in one-letter code: Prefoldin subunit alpha (132 aa).

The protein belongs to the prefoldin subunit alpha family. As to quaternary structure, heterohexamer of two alpha and four beta subunits.

The protein localises to the cytoplasm. In terms of biological role, molecular chaperone capable of stabilizing a range of proteins. Seems to fulfill an ATP-independent, HSP70-like function in archaeal de novo protein folding. This Pyrobaculum islandicum (strain DSM 4184 / JCM 9189 / GEO3) protein is Prefoldin subunit alpha.